The chain runs to 487 residues: Signal recognition particle subunit SRP54 (487 aa).

The tract at residues 1 to 295 (MVLSQLGSSL…DAESFVRKLL (295 aa)) is G-domain. Residues 108–115 (GLQGAGKT), 190–194 (DTSGR), and 248–251 (TKLD) contribute to the GTP site. The tract at residues 296-487 (GMGDLKGIAK…LGGTGKKGKK (192 aa)) is M-domain.

Belongs to the GTP-binding SRP family. SRP54 subfamily. Component of a signal recognition particle (SRP) complex that consists of a 7SL RNA molecule of 300 nucleotides and six protein subunits: SRP72, SRP68, SRP54, SRP19, SRP14 and SRP9.

The protein localises to the cytoplasm. The protein resides in the endoplasmic reticulum. It catalyses the reaction GTP + H2O = GDP + phosphate + H(+). Its function is as follows. Component of the signal recognition particle (SRP) complex, a ribonucleoprotein complex that mediates the cotranslational targeting of secretory and membrane proteins to the endoplasmic reticulum (ER). As part of the SRP complex, associates with the SRP receptor (SR) component SRPRA to target secretory proteins to the endoplasmic reticulum membrane. Binds to the signal sequence of presecretory proteins when they emerge from the ribosomes. Displays basal GTPase activity, and stimulates reciprocal GTPase activation of the SR subunit SRPRA. Forms a guanosine 5'-triphosphate (GTP)-dependent complex with the SR subunit SRPRA. SR compaction and GTPase mediated rearrangement of SR drive SRP-mediated cotranslational protein translocation into the ER. Requires the presence of SRP9/SRP14 and/or SRP19 to stably interact with RNA. This Entamoeba histolytica (strain ATCC 30459 / HM-1:IMSS / ABRM) protein is Signal recognition particle subunit SRP54.